Reading from the N-terminus, the 302-residue chain is Putative S-adenosyl-L-methionine-dependent methyltransferase MMAR_1068 (302 aa).

Residues Asp-127 and 156 to 157 contribute to the S-adenosyl-L-methionine site; that span reads DL.

The protein belongs to the UPF0677 family.

Functionally, exhibits S-adenosyl-L-methionine-dependent methyltransferase activity. In Mycobacterium marinum (strain ATCC BAA-535 / M), this protein is Putative S-adenosyl-L-methionine-dependent methyltransferase MMAR_1068.